The sequence spans 502 residues: MSDQNNTPAASQDENHIISERREKLAAWRAGGRAFPNDFSRENIAGKLDEIYGEKESQELDATPVEVKVAGRIMLKRVMGKASFMTIQDLSGQIQLYVTRDAVGEDVYADFKHWDIGDIVGAVGTLFKTRTGELSVKCTDIRLLTKSLRPLPDKFHGLTDVEQKYRQRHLDLIMNEQTRFTFVARSRMVQSIRNYMVSHGFLEVETPMMHPIPGGAAAKPFTTHHNALDMELFLRIAPELYLKRLVVGGFEKVFEVNRNFRNEGLSPRHNPEFTMMEFYEAYANYKSLMNFTEGLLRQAAREALGTEVFVYQGRELDLSKPFARLTIVEAIHQFHPGFSIAQLNDEAWLRAKLTDLKAKLRDDAGLGTLQLMLFEETTEAELWEPTFIIDYPAEVSPLARRNDANPEITERFELFIVGREIANGFSELNDPEDQAARFLEQVKAKEAGDEEAMFYDADYIRALEYGLPPTGGCGIGIDRLVMLLTDSPSIRDVILFPQMRTE.

Mg(2+) contacts are provided by Glu413 and Glu420.

It belongs to the class-II aminoacyl-tRNA synthetase family. Homodimer. Requires Mg(2+) as cofactor.

Its subcellular location is the cytoplasm. It carries out the reaction tRNA(Lys) + L-lysine + ATP = L-lysyl-tRNA(Lys) + AMP + diphosphate. The chain is Lysine--tRNA ligase from Aromatoleum aromaticum (strain DSM 19018 / LMG 30748 / EbN1) (Azoarcus sp. (strain EbN1)).